Reading from the N-terminus, the 207-residue chain is Alpha-1-acid glycoprotein 2 (207 aa).

The first 18 residues, 1 to 18 (MALHMILVMVSLLPLLEA), serve as a signal peptide directing secretion. Residue Gln19 is modified to Pyrrolidone carboxylic acid. 5 N-linked (GlcNAc...) asparagine glycosylation sites follow: Asn25, Asn34, Asn76, Asn94, and Asn104. Cys91 and Cys184 are joined by a disulfide. The disordered stretch occupies residues 188–207 (EKQQLELEKETKKDPEEGQA).

This sequence belongs to the calycin superfamily. Lipocalin family. In terms of tissue distribution, expressed by the liver and secreted in plasma.

It localises to the secreted. Functions as a transport protein in the blood stream. Binds various ligands in the interior of its beta-barrel domain. Appears to function in modulating the activity of the immune system during the acute-phase reaction. This chain is Alpha-1-acid glycoprotein 2 (Orm2), found in Mus musculus (Mouse).